Consider the following 92-residue polypeptide: Small ribosomal subunit protein uS19 (92 aa).

Belongs to the universal ribosomal protein uS19 family.

Protein S19 forms a complex with S13 that binds strongly to the 16S ribosomal RNA. The sequence is that of Small ribosomal subunit protein uS19 from Acidiphilium cryptum (strain JF-5).